We begin with the raw amino-acid sequence, 489 residues long: Protein LMBR1L (489 aa).

Residues 1-21 (MEAADYEVLSVREQLFHDRVR) lie on the Extracellular side of the membrane. Residues 1–59 (MEAADYEVLSVREQLFHDRVRECIISILLFATLYILCHIFLTRFKKPAEFTTVDDEDAT) are interaction with LGB. The interval 1–76 (MEAADYEVLS…LCTFTLAVAL (76 aa)) is LCN1-binding. The helical transmembrane segment at 22-42 (ECIISILLFATLYILCHIFLT) threads the bilayer. Residues 43-66 (RFKKPAEFTTVDDEDATVNKIALE) are Cytoplasmic-facing. A helical membrane pass occupies residues 67-87 (LCTFTLAVALGAVLLLPFSII). Residues 88–114 (SNEVLLSLPRNYYIQWLNGSLIHGLWN) are Extracellular-facing. The chain crosses the membrane as a helical span at residues 115–135 (LVFLFSNLSLVFLMPFAYFFT). Residues 136 to 154 (ESEGFAGSRKGVLGRVYET) are Cytoplasmic-facing. A helical transmembrane segment spans residues 155–175 (VVMLILLTLLVLGMVWVASAI). Over 176 to 196 (VDNDKASRESLYDFWEYYLPY) the chain is Extracellular. Residues 197-217 (LYSCISFLGVLLLLVCTPLGL) form a helical membrane-spanning segment. At 218 to 305 (ARMFSVTGKL…NLGYPLAMLC (88 aa)) the chain is on the cytoplasmic side. A helical membrane pass occupies residues 306-326 (LLVLTGLSVLIVAVHILELLI). The Extracellular segment spans residues 327–350 (DEAAMPRGMQDAALGQASFSKLGS). Residues 351–371 (FGAIIQVVLIFYLMVSSVVGF) form a helical membrane-spanning segment. Topologically, residues 372–388 (YSSPLFGSLRPRWHDTS) are cytoplasmic. A helical transmembrane segment spans residues 389–409 (MTQIIGNCVCLLVLSSALPVF). At 410 to 431 (SRTLGLTRFDLLGDFGRFNWLG) the chain is on the extracellular side. Residues 432 to 452 (NFYIVFLYNAAFAGLTTLCLV) traverse the membrane as a helical segment. The Cytoplasmic segment spans residues 453-489 (KTFTAAVRAELIRAFGLDRLPLPVSGFPRASRKKQHQ).

This sequence belongs to the LIMR family. As to quaternary structure, dimer. Can also form higher oligomers. Interacts with LCN1; this interaction mediates the endocytosis of LCN1. Interacts with UBAC2, FAF2, VCP, AMFR, ZNRF3, CTNNB1, LRP6, GSK3B, FZD6, DVL2 and RNF43. Interacts with GSK3A. Interaction with LGB and SCGB1A1 is controversial. Highly expressed in the bone marrow, thymus, spleen and lymphocytes.

The protein resides in the cell membrane. It is found in the endoplasmic reticulum membrane. Its function is as follows. Plays an essential role in lymphocyte development by negatively regulating the canonical Wnt signaling pathway. In association with UBAC2 and E3 ubiquitin-protein ligase AMFR, promotes the ubiquitin-mediated degradation of CTNNB1 and Wnt receptors FZD6 and LRP6. LMBR1L stabilizes the beta-catenin destruction complex that is required for regulating CTNNB1 levels. Acts as a LCN1 receptor and can mediate its endocytosis. In Mus musculus (Mouse), this protein is Protein LMBR1L (Lmbr1l).